The chain runs to 328 residues: LOB domain-containing protein 27 (328 aa).

The region spanning 35-136 (GACAACKYQR…EELKAVNSQL (102 aa)) is the LOB domain.

It belongs to the LOB domain-containing protein family.

The protein is LOB domain-containing protein 27 (LBD27) of Arabidopsis thaliana (Mouse-ear cress).